The primary structure comprises 751 residues: Cytosolic neutral trehalase (751 aa).

Polar residues predominate over residues 1–10; the sequence is MSQVNTSQGP. A disordered region spans residues 1-59; it reads MSQVNTSQGPVAQGRQRRLSSLSEFNDPFSNAEVYYGPPTDPRKQKQAKPAKINRTRTM. Serine 2 is modified (N-acetylserine). Phosphoserine; by PKA is present on residues serine 20 and serine 21. The residue at position 23 (serine 23) is a Phosphoserine. Basic residues predominate over residues 45–55; that stretch reads QKQAKPAKINR. The residue at position 58 (threonine 58) is a Phosphothreonine. Residue serine 60 is modified to Phosphoserine; by PKA. Serine 66 carries the post-translational modification Phosphoserine. Residues 73–92 form a disordered region; that stretch reads FGKLQQTRRGSEDDTYSSSQ. Position 83 is a phosphoserine; by PKA (serine 83). Ca(2+) is bound by residues aspartate 114, aspartate 116, asparagine 118, glutamine 120, and aspartate 125. Substrate-binding positions include arginine 302, 309 to 310, asparagine 346, 355 to 357, glutamate 424, arginine 473, and glycine 476; these read WD and RSQ. Catalysis depends on proton donor/acceptor residues aspartate 478 and glutamate 674.

Belongs to the glycosyl hydrolase 37 family. In terms of assembly, monomer. Interacts with BMH1 dimers; the interaction is direct and activates NTH1. Interacts with BMH2. It depends on Ca(2+) as a cofactor. In terms of processing, phosphorylated by protein kinase A (PKA); phosphorylation at Ser-60 and Ser-83 is required for activation by the 14-3-3 proteins BMH1 and BMH2.

The protein localises to the cytoplasm. It catalyses the reaction alpha,alpha-trehalose + H2O = alpha-D-glucose + beta-D-glucose. Its pathway is carbohydrate degradation. Its activity is regulated as follows. Activated by calcium. Activated by protein kinase A (PKA)-mediated phosphorylation. In terms of biological role, hydrolyzes intracellular trehalose to glucose. The disaccharide trehalose serves as a storage carbohydrate that is mobilized during nutrient stress. Regulates the level of trehalose as a protectant for cell integrity during heat stress. The protein is Cytosolic neutral trehalase of Saccharomyces cerevisiae (strain ATCC 204508 / S288c) (Baker's yeast).